The sequence spans 188 residues: Glutamyl endopeptidase 2 (188 aa).

Cysteines 14 and 34 form a disulfide. Residues His-33, Asp-62, and Ser-143 each act as charge relay system in the active site. The cysteines at positions 137 and 163 are disulfide-linked.

Belongs to the peptidase S1 family. As to quaternary structure, monomer.

It catalyses the reaction Preferential cleavage: -Glu-|-Xaa- &gt;&gt; -Asp-|-Xaa-. Preference for Pro or Leu at P2 and Phe at P3. Cleavage of -Glu-|-Asp- and -Glu-|-Pro- bonds is slow.. Preferentially cleaves peptide bonds on the carboxyl-terminal side of glutamate. The sequence is that of Glutamyl endopeptidase 2 (sprE) from Streptomyces griseus.